Consider the following 181-residue polypeptide: Large ribosomal subunit protein uL5 (181 aa).

It belongs to the universal ribosomal protein uL5 family. In terms of assembly, part of the 50S ribosomal subunit; part of the 5S rRNA/L5/L18/L25 subcomplex. Contacts the 5S rRNA and the P site tRNA. Forms a bridge to the 30S subunit in the 70S ribosome.

In terms of biological role, this is one of the proteins that bind and probably mediate the attachment of the 5S RNA into the large ribosomal subunit, where it forms part of the central protuberance. In the 70S ribosome it contacts protein S13 of the 30S subunit (bridge B1b), connecting the 2 subunits; this bridge is implicated in subunit movement. Contacts the P site tRNA; the 5S rRNA and some of its associated proteins might help stabilize positioning of ribosome-bound tRNAs. This chain is Large ribosomal subunit protein uL5, found in Thermosipho africanus (strain TCF52B).